The chain runs to 401 residues: Tryptophan synthase beta chain (401 aa).

Lysine 92 carries the N6-(pyridoxal phosphate)lysine modification.

It belongs to the TrpB family. In terms of assembly, tetramer of two alpha and two beta chains. Requires pyridoxal 5'-phosphate as cofactor.

It catalyses the reaction (1S,2R)-1-C-(indol-3-yl)glycerol 3-phosphate + L-serine = D-glyceraldehyde 3-phosphate + L-tryptophan + H2O. The protein operates within amino-acid biosynthesis; L-tryptophan biosynthesis; L-tryptophan from chorismate: step 5/5. Functionally, the beta subunit is responsible for the synthesis of L-tryptophan from indole and L-serine. The polypeptide is Tryptophan synthase beta chain (Vesicomyosocius okutanii subsp. Calyptogena okutanii (strain HA)).